A 399-amino-acid polypeptide reads, in one-letter code: Acetate kinase (399 aa).

Asparagine 9 contacts Mg(2+). Position 16 (lysine 16) interacts with ATP. Arginine 90 contributes to the substrate binding site. Residue aspartate 147 is the Proton donor/acceptor of the active site. ATP contacts are provided by residues histidine 207–glycine 211, aspartate 281–arginine 283, and glycine 333–asparagine 337. Residue glutamate 387 coordinates Mg(2+).

The protein belongs to the acetokinase family. As to quaternary structure, homodimer. Mg(2+) serves as cofactor. Requires Mn(2+) as cofactor.

It is found in the cytoplasm. The catalysed reaction is acetate + ATP = acetyl phosphate + ADP. Its pathway is metabolic intermediate biosynthesis; acetyl-CoA biosynthesis; acetyl-CoA from acetate: step 1/2. In terms of biological role, catalyzes the formation of acetyl phosphate from acetate and ATP. Can also catalyze the reverse reaction. The sequence is that of Acetate kinase from Mycobacterium sp. (strain KMS).